Consider the following 444-residue polypeptide: Alpha-N-acetylgalactosaminidase (444 aa).

NAD(+) is bound by residues 30 to 31 (LR), Asp52, Asn80, 101 to 104 (WEWH), His107, 121 to 122 (EV), and Asn150. A substrate-binding site is contributed by Tyr179. Residue 208–212 (SEAKW) coordinates NAD(+). Residues Arg213, 225–228 (YPTH), and Tyr307 each bind substrate. Tyr225 contacts NAD(+).

The protein belongs to the Gfo/Idh/MocA family. Glycosyl hydrolase 109 subfamily. It depends on NAD(+) as a cofactor.

The enzyme catalyses Cleavage of non-reducing alpha-(1-&gt;3)-N-acetylgalactosamine residues from human blood group A and AB mucin glycoproteins, Forssman hapten and blood group A lacto series glycolipids.. In terms of biological role, glycosidase that has specific alpha-N-acetylgalactosaminidase activity. The protein is Alpha-N-acetylgalactosaminidase (nagA) of Elizabethkingia meningoseptica (Chryseobacterium meningosepticum).